Consider the following 120-residue polypeptide: Autophagy-related protein 8d (120 aa).

A lipid anchor (Phosphatidylethanolamine amidated glycine) is attached at glycine 117. Residues 118–120 constitute a propeptide, removed in mature form; sequence IFF.

The protein belongs to the ATG8 family. As to quaternary structure, interacts with ATG4B. Interacts with NBR1. In terms of processing, the C-terminal 3 residues are removed by ATG4 to expose Gly-117 at the C-terminus. This Gly-117 forms then a thioester bond with the 'Cys-558' of ATG7 (E1-like activating enzyme) before being transferred to the 'Cys-258' of ATG3 (the specific E2 conjugating enzyme), in order to be finally amidated with phosphatidylethanolamine. This lipid modification anchors ATG8 to autophagosomes. Constitutively expressed.

Its subcellular location is the cytoplasmic vesicle. It is found in the autophagosome membrane. It localises to the vacuole membrane. The protein localises to the cytoplasm. The protein resides in the cytoskeleton. In terms of biological role, ubiquitin-like modifier involved in autophagosomes formation. May mediate the delivery of the autophagosomes to the vacuole via the microtubule cytoskeleton. The chain is Autophagy-related protein 8d (ATG8D) from Arabidopsis thaliana (Mouse-ear cress).